We begin with the raw amino-acid sequence, 213 residues long: Uridine kinase (213 aa).

15 to 22 lines the ATP pocket; that stretch reads GASASGKS.

The protein belongs to the uridine kinase family.

Its subcellular location is the cytoplasm. It carries out the reaction uridine + ATP = UMP + ADP + H(+). The enzyme catalyses cytidine + ATP = CMP + ADP + H(+). It functions in the pathway pyrimidine metabolism; CTP biosynthesis via salvage pathway; CTP from cytidine: step 1/3. It participates in pyrimidine metabolism; UMP biosynthesis via salvage pathway; UMP from uridine: step 1/1. The protein is Uridine kinase of Escherichia coli O157:H7.